Consider the following 208-residue polypeptide: GTP cyclohydrolase 1 (208 aa).

Zn(2+) contacts are provided by Cys98, His101, and Cys169.

The protein belongs to the GTP cyclohydrolase I family. As to quaternary structure, toroid-shaped homodecamer, composed of two pentamers of five dimers.

It catalyses the reaction GTP + H2O = 7,8-dihydroneopterin 3'-triphosphate + formate + H(+). It functions in the pathway cofactor biosynthesis; 7,8-dihydroneopterin triphosphate biosynthesis; 7,8-dihydroneopterin triphosphate from GTP: step 1/1. The protein is GTP cyclohydrolase 1 of Agrobacterium fabrum (strain C58 / ATCC 33970) (Agrobacterium tumefaciens (strain C58)).